The sequence spans 99 residues: Acylphosphatase-1 (99 aa).

In terms of domain architecture, Acylphosphatase-like spans Ser9 to Lys99. Residues Arg24 and Asn42 contribute to the active site.

The protein belongs to the acylphosphatase family.

The enzyme catalyses an acyl phosphate + H2O = a carboxylate + phosphate + H(+). This Xenopus laevis (African clawed frog) protein is Acylphosphatase-1 (acyp1).